Consider the following 181-residue polypeptide: Sodium/potassium-transporting ATPase subunit beta-1-interacting protein 3 (181 aa).

Helical transmembrane passes span 5–22 (TGRCTLIFICTLQMLVAL), 35–55 (APILGNFLHIIVVILGLFGTI), 62–82 (IVAYTIWTAFWVAWNVFIICF), and 151–171 (AVQILLSLIGFVYACYVISVI).

This sequence belongs to the NKAIN family. As to quaternary structure, interacts with atp1b1 C-terminus.

Its subcellular location is the cell membrane. This is Sodium/potassium-transporting ATPase subunit beta-1-interacting protein 3 (nkain3) from Xenopus tropicalis (Western clawed frog).